A 500-amino-acid chain; its full sequence is Lysine--tRNA ligase (500 aa).

Residues glutamate 406 and glutamate 413 each coordinate Mg(2+).

This sequence belongs to the class-II aminoacyl-tRNA synthetase family. In terms of assembly, homodimer. Mg(2+) serves as cofactor.

It localises to the cytoplasm. It carries out the reaction tRNA(Lys) + L-lysine + ATP = L-lysyl-tRNA(Lys) + AMP + diphosphate. This chain is Lysine--tRNA ligase, found in Sulfolobus acidocaldarius (strain ATCC 33909 / DSM 639 / JCM 8929 / NBRC 15157 / NCIMB 11770).